Consider the following 322-residue polypeptide: Protease HtpX homolog (322 aa).

Helical transmembrane passes span 19 to 39 (ILLI…CYLL) and 61 to 81 (FINL…IAYF). His-165 is a binding site for Zn(2+). Residue Glu-166 is part of the active site. A Zn(2+)-binding site is contributed by His-169. The next 2 membrane-spanning stretches (helical) occupy residues 175-195 (VRLL…AQIA) and 216-236 (ILIL…ATLM). Position 245 (Glu-245) interacts with Zn(2+).

The protein belongs to the peptidase M48B family. The cofactor is Zn(2+).

The protein resides in the cell inner membrane. The chain is Protease HtpX homolog from Bacteroides fragilis (strain YCH46).